The following is a 1319-amino-acid chain: ERAD-associated E3 ubiquitin-protein ligase DOA10 (1319 aa).

At methionine 1 the chain carries N-acetylmethionine. At 1–131 the chain is on the cytoplasmic side; sequence MDVDSDVNVS…LTFFEKARLA (131 aa). An RING-CH-type zinc finger spans residues 31–100; sequence DDAPSGATCR…DICHYPIQFK (70 aa). Zn(2+) contacts are provided by cysteine 39, cysteine 42, cysteine 56, cysteine 58, histidine 66, cysteine 69, cysteine 90, and cysteine 93. The helical transmembrane segment at 132–152 threads the bilayer; the sequence is LTIGLAAVLYIIGVPLVWNMF. Over 153–203 the chain is Lumenal; it reads GKLYTMMLDGSSPYPGDFLKSLIYGYDQSATPELTTRAIFYQLLQNHSFTS. The helical transmembrane segment at 204-224 threads the bilayer; sequence LQFIMIVILHIALYFQYDMIV. At 225–468 the chain is on the cytoplasmic side; that stretch reads REDVFSKMVF…GPLVINLKLK (244 aa). Over residues 291–306 the composition is skewed to low complexity; the sequence is ADNNNNVINPRNDNVP. Disordered regions lie at residues 291-315 and 329-381; these read ADNN…DHRN and EATE…EADY. Residues 469 to 489 form a helical membrane-spanning segment; that stretch reads LLNVIAYFIIAVVFTAIYLAI. At 490–491 the chain is on the lumenal side; it reads SY. Residues 492 to 512 form a helical membrane-spanning segment; it reads LFPTFIGFGLLKIYFGIFKVI. The Cytoplasmic segment spans residues 513–626; sequence LRGLCHLYYL…LFALKCTFKV (114 aa). A helical transmembrane segment spans residues 627 to 647; the sequence is FTLFFIELAGFPILAGVMLDF. The Lumenal segment spans residues 648 to 660; that stretch reads SLFCPILASNSRM. A helical membrane pass occupies residues 661–681; the sequence is LWVPSICAIWPPFSLFVYWTI. Topologically, residues 682–739 are cytoplasmic; it reads GTLYMYWFAKYIGMIRKNIIRPGVLFFIRSPEDPNIKILHDSLIHPMSIQLSRLCLSM. A helical transmembrane segment spans residues 740–760; it reads FIYAIFIVLGFGFHTRIFFPF. The Lumenal portion of the chain corresponds to 761-777; it reads MLKSNLLSVPEAYKPTS. The chain crosses the membrane as a helical span at residues 778-797; that stretch reads IISWKFNTILLTLYFTKRIL. Over 798–965 the chain is Cytoplasmic; it reads ESSSYVKPLL…YVPPDFRLRY (168 aa). A helical transmembrane segment spans residues 966 to 986; that stretch reads MTLLGLVWLFASILMLGVTFI. Residues 987-1019 lie on the Lumenal side of the membrane; it reads SQALINFVCSFGFLPVVKLLLGERNKVYVAWKE. The helical transmembrane segment at 1020 to 1040 threads the bilayer; that stretch reads LSDISYSYLNIYYVCVGSVCL. At 1041-1113 the chain is on the cytoplasmic side; sequence SKIAKDILHF…IFDSMLVKYN (73 aa). A helical transmembrane segment spans residues 1114–1134; it reads LMVFIAIMIAVIRTMVSWVVL. Over 1135 to 1168 the chain is Lumenal; sequence TDGILACYNYLTIRVFGNSSYTIGNSKWFKYDES. The chain crosses the membrane as a helical span at residues 1169-1189; that stretch reads LLFVVWIISSMVNFGTGYKSL. Over 1190 to 1213 the chain is Cytoplasmic; that stretch reads KLFFRNRNTSKLNFLKTMALELFK. The helical transmembrane segment at 1214 to 1234 threads the bilayer; it reads QGFLHMVIYVLPIIILSLVFL. Residues 1235–1270 lie on the Lumenal side of the membrane; that stretch reads RDVSTKQIIDISHGSRSFTLSLNESFPTWTRMQDIY. A helical transmembrane segment spans residues 1271–1291; that stretch reads FGLLIALESFTFFFQATVLFI. At 1292-1319 the chain is on the cytoplasmic side; the sequence is QWFKSTVQNVKDEVYTKGRALENLPDES.

It belongs to the DOA10/MARCH6 family. In terms of assembly, component of the DOA10 ubiquitin ligase complex which contains E3 ligase SSM4/DOA10 and CDC48-binding protein UBX2/SEL1. The DOA10 complex interacts with the heterotrimeric CDC48-NPL4-UFD1 ATPase complex which is recruited by UBX2/SEL1 via its interaction with CDC48. Interacts with its associated ubiquitin conjugating enzymes UBC6 and UBC7 with its membrane anchor CUE1. Interacts with PEX29.

It is found in the endoplasmic reticulum membrane. The protein localises to the nucleus inner membrane. The catalysed reaction is S-ubiquitinyl-[E2 ubiquitin-conjugating enzyme]-L-cysteine + [acceptor protein]-L-lysine = [E2 ubiquitin-conjugating enzyme]-L-cysteine + N(6)-ubiquitinyl-[acceptor protein]-L-lysine.. Its pathway is protein modification; protein ubiquitination. Its function is as follows. E3 ubiquitin-protein ligase which accepts ubiquitin specifically from endoplasmic reticulum-associated UBC6 and UBC7 E2 ligases, and transfers it to substrates promoting their degradation. Mediates the degradation of a broad range of substrates, including endoplasmic reticulum membrane proteins (ERQC), soluble nuclear proteins and soluble cytoplasmic proteins (CytoQC). Component of the DOA10 ubiquitin ligase complex, which is part of the ERAD-C pathway responsible for the rapid degradation of membrane proteins with misfolded cytoplasmic domains. ERAD-C substrates are ubiquitinated through DOA10 in conjunction with the E2 ubiquitin-conjugating enzymes UBC6 and UBC7-CUE1. Ubiquitinated substrates are then removed to the cytosol via the action of the UFD1-NPL4-CDC48/p97 (UNC) AAA ATPase complex and targeted to the proteasome. Also recognizes the N-terminally acetylated residue of proteins as degradation signal (degron). N-terminally acetylated target proteins include MATALPHA2, TBF1, SLK19, YMR090W, HIS3, HSP104, UBP6 and ARO8. Catalyzes ubiquitination of mislocalized tail-anchored proteins that are extracted from the mitochondrion membrane by MSP1: following extraction, mistargeted proteins are transferred to the endoplasmic reticulum, where they are ubiquitinated by DOA10 and degraded by the proteasome. The sequence is that of ERAD-associated E3 ubiquitin-protein ligase DOA10 (SSM4) from Saccharomyces cerevisiae (strain ATCC 204508 / S288c) (Baker's yeast).